The primary structure comprises 108 residues: MFGERLKKCRTSKGYSQQRMADFLGITRQGYGKYEIGKAEPDLKTLTKLSNILGVSTDFLLKGTHAQFDLDEILNDPETLIAGYNGMISEEQAKELLYYLLKKEFEEH.

The region spanning 6–60 (LKKCRTSKGYSQQRMADFLGITRQGYGKYEIGKAEPDLKTLTKLSNILGVSTDFL) is the HTH cro/C1-type domain. Residues 17 to 36 (QQRMADFLGITRQGYGKYEI) constitute a DNA-binding region (H-T-H motif).

The polypeptide is SPbeta prophage-derived uncharacterized HTH-type transcriptional regulator YonR (yonR) (Bacillus subtilis (strain 168)).